The primary structure comprises 245 residues: 8-amino-3,8-dideoxy-manno-octulosonate cytidylyltransferase (245 aa).

Belongs to the KdsB family.

The protein resides in the cytoplasm. It carries out the reaction 8-amino-3,8-dideoxy-alpha-D-manno-octulosonate + CTP = CMP-8-amino-3,8-dideoxy-alpha-D-manno-oct-2-ulosonate + diphosphate. The protein operates within bacterial outer membrane biogenesis; lipopolysaccharide biosynthesis. Activates KDO8N (a required 8-carbon sugar) for incorporation into bacterial lipopolysaccharide in the Shewanella genus. In Shewanella sp. (strain W3-18-1), this protein is 8-amino-3,8-dideoxy-manno-octulosonate cytidylyltransferase.